Here is a 226-residue protein sequence, read N- to C-terminus: UPF0758 protein M6_Spy0838 (226 aa).

The MPN domain occupies 103–225 (SVLTSVQVAE…YYSFREKSTL (123 aa)). Residues H174, H176, and D187 each contribute to the Zn(2+) site. A JAMM motif motif is present at residues 174-187 (HNHPSGNIEPSSND).

The protein belongs to the UPF0758 family.

This Streptococcus pyogenes serotype M6 (strain ATCC BAA-946 / MGAS10394) protein is UPF0758 protein M6_Spy0838.